Reading from the N-terminus, the 429-residue chain is Isocitrate dehydrogenase [NADP] (429 aa).

T108 is a binding site for NADP(+). D-threo-isocitrate-binding residues include S117, N119, R123, R133, and R156. D308 provides a ligand contact to Mg(2+). Residues 340-346 (HGSAPKY), N353, Y393, and R397 each bind NADP(+).

It belongs to the isocitrate and isopropylmalate dehydrogenases family. In terms of assembly, homodimer. Mg(2+) serves as cofactor. It depends on Mn(2+) as a cofactor.

It catalyses the reaction D-threo-isocitrate + NADP(+) = 2-oxoglutarate + CO2 + NADPH. In terms of biological role, catalyzes the oxidative decarboxylation of isocitrate to 2-oxoglutarate and carbon dioxide with the concomitant reduction of NADP(+). The chain is Isocitrate dehydrogenase [NADP] (icd) from Caldococcus noboribetus.